We begin with the raw amino-acid sequence, 284 residues long: Acetylglutamate kinase (284 aa).

Substrate-binding positions include 64–65 (GG), Arg86, and Asn181.

This sequence belongs to the acetylglutamate kinase family. ArgB subfamily.

Its subcellular location is the cytoplasm. It carries out the reaction N-acetyl-L-glutamate + ATP = N-acetyl-L-glutamyl 5-phosphate + ADP. It participates in amino-acid biosynthesis; L-arginine biosynthesis; N(2)-acetyl-L-ornithine from L-glutamate: step 2/4. Its function is as follows. Catalyzes the ATP-dependent phosphorylation of N-acetyl-L-glutamate. This is Acetylglutamate kinase from Wolinella succinogenes (strain ATCC 29543 / DSM 1740 / CCUG 13145 / JCM 31913 / LMG 7466 / NCTC 11488 / FDC 602W) (Vibrio succinogenes).